The sequence spans 228 residues: UPF0758 protein CLK_2387 (228 aa).

Positions 106–228 (KISTPLDVSN…YVSMKEKGTI (123 aa)) constitute an MPN domain. Zn(2+) is bound by residues H177, H179, and D190. A JAMM motif motif is present at residues 177-190 (HNHPSGDPTPSKED).

The protein belongs to the UPF0758 family.

In Clostridium botulinum (strain Loch Maree / Type A3), this protein is UPF0758 protein CLK_2387.